The sequence spans 657 residues: UvrABC system protein B (657 aa).

The Helicase ATP-binding domain maps to 29 to 416 (KLAEFQTNEQ…LSHNNVVEQL (388 aa)). Position 42–49 (42–49 (GATGTGKT)) interacts with ATP. Positions 95 to 118 (YFDFYQPEAYLPAKGVYIEKSATV) match the Beta-hairpin motif. Residues 435–597 (QVEDLVSEII…KTPMTVQKPI (163 aa)) form the Helicase C-terminal domain. The UVR domain maps to 615–650 (AALIKQLTKEMKQAAANQNYELAIEIRDSIFELEKQ).

This sequence belongs to the UvrB family. Forms a heterotetramer with UvrA during the search for lesions. Interacts with UvrC in an incision complex.

It is found in the cytoplasm. The UvrABC repair system catalyzes the recognition and processing of DNA lesions. A damage recognition complex composed of 2 UvrA and 2 UvrB subunits scans DNA for abnormalities. Upon binding of the UvrA(2)B(2) complex to a putative damaged site, the DNA wraps around one UvrB monomer. DNA wrap is dependent on ATP binding by UvrB and probably causes local melting of the DNA helix, facilitating insertion of UvrB beta-hairpin between the DNA strands. Then UvrB probes one DNA strand for the presence of a lesion. If a lesion is found the UvrA subunits dissociate and the UvrB-DNA preincision complex is formed. This complex is subsequently bound by UvrC and the second UvrB is released. If no lesion is found, the DNA wraps around the other UvrB subunit that will check the other stand for damage. The protein is UvrABC system protein B of Mycoplasma pneumoniae (strain ATCC 29342 / M129 / Subtype 1) (Mycoplasmoides pneumoniae).